A 60-amino-acid chain; its full sequence is UPF0434 protein NMCC_0628 (60 aa).

Belongs to the UPF0434 family.

The chain is UPF0434 protein NMCC_0628 from Neisseria meningitidis serogroup C (strain 053442).